Reading from the N-terminus, the 187-residue chain is MRKFLKSAIEYLAKDLDLDKELLEQIQYVVIVLTFEFIKCISVILIAGILGYFKESLIVILSMCFIKPFIGGYHEDSQLKCFIATLIITTSIIMLVTFNKLNLFSIVILNLFSIFSIYNKAPVIDSRFPLTKEHLIKKNKILSVTNSSILFLITLIFFKISWISQTITWTLLIQTLLLFNKYKREDS.

The next 5 helical transmembrane spans lie at 29-49 (VVIV…IAGI), 50-70 (LGYF…KPFI), 81-98 (CFIA…LVTF), 103-120 (LFSI…IYNK), and 149-169 (ILFL…TITW).

The protein belongs to the AgrB family.

It localises to the cell membrane. Its function is as follows. May be involved in the proteolytic processing of a quorum sensing system signal molecule precursor. The sequence is that of Putative AgrB-like protein 1 from Clostridium perfringens (strain 13 / Type A).